The following is a 251-amino-acid chain: Cathelicidin-B1 (251 aa).

Residues 1–20 form the signal peptide; that stretch reads MGRMWASEVLLLLLLGSSRA. A propeptide spanning residues 21–211 is cleaved from the precursor; the sequence is VTPGLDVSTA…ELRCRPLRPQ (191 aa). Residues 29–109 form a disordered region; it reads TAPGLDGSIP…TITPKQDGSI (81 aa). 2 disulfide bridges follow: C172–C181 and C189–C205.

The protein belongs to the cathelicidin family. As to expression, detected in bursa of Fabricius, in filamentous structures surrounding the basal and lateral surfaces of bursal M cells (at protein level). Detected in bursa of Fabricius, in secretory enterocytes of the interfollicular bursal epithelium, but not in M cells.

Its subcellular location is the secreted. In terms of biological role, has potent antimicrobial activity against Gram-positive and Gram-negative bacteria (in vitro). May play a role in the innate immune response. This chain is Cathelicidin-B1 (CATHB1), found in Gallus gallus (Chicken).